The primary structure comprises 238 residues: FQLNVIANMNNHTMLKQTSIHWHCHFQKGTNWADGHAFVNACPIASGHSFLYDFTAPDQHGTFWYHSHLSTQYCDGLRGHFVVYDPADPHHDLYDVDDEHTIITLADWYHVAAKLGHHFQLGADSTLINGSGRFAGDPTAHLTVIYVTQGKRYRFHLVSLSCDPNHVFSIDSNHMTVIEADAVSHEHCTVDSIQIYAGQRYSFHLTVDQDVDNYWIRAHPSFGTYSFHDGINSAIARY.

2 consecutive Plastocyanin-like domains span residues 4-87 (NVIA…YDPA) and 100-238 (HTII…IARY). Asn8 is a glycosylation site (N-linked (GlcNAc...) asparagine). Positions 21, 23, 66, and 68 each coordinate Cu cation. Cys74 and Cys162 form a disulfide bridge. An N-linked (GlcNAc...) asparagine glycan is attached at Asn165.

Belongs to the multicopper oxidase family. As to quaternary structure, monomer. Cu cation serves as cofactor.

It localises to the secreted. It carries out the reaction 4 hydroquinone + O2 = 4 benzosemiquinone + 2 H2O. Activity is strongly promoted by toluene. Activity is promoted by magnesium, potassium, cadmium, zinc, nickel, sodium, lead and manganese ions. Completely inhibited by IAA (cysteine protease inhibitor), PMSF (serine protease inhibitor), DEP (histidine protease inhibitor) and NAI (tyrosine protease inhibitor). Inhibited by ethanol, acetone, SDS, and EDTA. Activity is strongly inhibited by mercury ions. Also inhibited by lithium, aluminum, calcium, barium and iron ions. Its function is as follows. Lignin degradation and detoxification of lignin-derived products. Has activity towards 2,2'-azino-bis(3-ethylbenzothiazoline-6-sulfonic acid) (ABTS). In Trametes hirsuta (White-rot fungus), this protein is Laccase-S.